The primary structure comprises 232 residues: MRTLWRWLGKGVAAAVALVLLYQLWIFAHVLWWIDHDPRSTAFMETGLARQQAKNRDAVLRHKWVPYDRISNNLKRAVVAAEDARFVEHAGFDVAGIQKAFQKNVKKGRLVAGGSTITQQLAKNLFLSGERSFLRKGQEVVITLMIESTWSKRRILEVYLNVIEWGNGIYGAEAASRRYYKKSAATLSRDQAARMAAMIPNPRWYENHRGSRLYQRRVVLIKRYMGSVAVPR.

A helical membrane pass occupies residues 14 to 34 (AAVALVLLYQLWIFAHVLWWI).

The protein belongs to the glycosyltransferase 51 family.

The protein resides in the cell inner membrane. The catalysed reaction is [GlcNAc-(1-&gt;4)-Mur2Ac(oyl-L-Ala-gamma-D-Glu-L-Lys-D-Ala-D-Ala)](n)-di-trans,octa-cis-undecaprenyl diphosphate + beta-D-GlcNAc-(1-&gt;4)-Mur2Ac(oyl-L-Ala-gamma-D-Glu-L-Lys-D-Ala-D-Ala)-di-trans,octa-cis-undecaprenyl diphosphate = [GlcNAc-(1-&gt;4)-Mur2Ac(oyl-L-Ala-gamma-D-Glu-L-Lys-D-Ala-D-Ala)](n+1)-di-trans,octa-cis-undecaprenyl diphosphate + di-trans,octa-cis-undecaprenyl diphosphate + H(+). It functions in the pathway cell wall biogenesis; peptidoglycan biosynthesis. Its function is as follows. Peptidoglycan polymerase that catalyzes glycan chain elongation from lipid-linked precursors. This chain is Biosynthetic peptidoglycan transglycosylase, found in Thiobacillus denitrificans (strain ATCC 25259 / T1).